The following is a 380-amino-acid chain: Cytochrome b (380 aa).

4 helical membrane passes run 34–54 (FGSL…LLAA), 78–99 (WLIR…YLHI), 114–134 (WNTG…GYVL), and 179–199 (FFTL…IHLT). Residues His84 and His98 each coordinate heme b. Residues His183 and His197 each contribute to the heme b site. Position 202 (His202) interacts with a ubiquinone. 4 consecutive transmembrane segments (helical) span residues 227–247 (LKDT…ALFS), 289–309 (LGGV…PLLH), 321–341 (LFQL…WVGS), and 348–368 (FIII…ILFP).

The protein belongs to the cytochrome b family. In terms of assembly, the cytochrome bc1 complex contains 11 subunits: 3 respiratory subunits (MT-CYB, CYC1 and UQCRFS1), 2 core proteins (UQCRC1 and UQCRC2) and 6 low-molecular weight proteins (UQCRH/QCR6, UQCRB/QCR7, UQCRQ/QCR8, UQCR10/QCR9, UQCR11/QCR10 and a cleavage product of UQCRFS1). This cytochrome bc1 complex then forms a dimer. The cofactor is heme b.

The protein resides in the mitochondrion inner membrane. Component of the ubiquinol-cytochrome c reductase complex (complex III or cytochrome b-c1 complex) that is part of the mitochondrial respiratory chain. The b-c1 complex mediates electron transfer from ubiquinol to cytochrome c. Contributes to the generation of a proton gradient across the mitochondrial membrane that is then used for ATP synthesis. The sequence is that of Cytochrome b (MT-CYB) from Grus nigricollis (Black-necked crane).